Consider the following 313-residue polypeptide: Olfactory receptor 5H1 (313 aa).

At 1-28 (MEEENATLLTEFVLTGFLYQPQWKIPLF) the chain is on the extracellular side. N-linked (GlcNAc...) asparagine glycosylation is present at N5. Residues 29-49 (LAFLVIYLITIMGNLGLIAVI) traverse the membrane as a helical segment. At 50–56 (WKDPHLH) the chain is on the cytoplasmic side. A helical transmembrane segment spans residues 57–77 (IPMYLLLGNLAFVDAWISSTV). The Extracellular portion of the chain corresponds to 78-98 (TPKMLNNFLAKSKMISLSECK). C97 and C179 are oxidised to a cystine. A helical membrane pass occupies residues 99–119 (IQFFSFAISVTTECFLLATMA). Residues 120-143 (YDRYVAICKPLLYPAIMTNGLCIR) lie on the Cytoplasmic side of the membrane. Residues 144–164 (LLILSYVGGILHALIHEGFLF) traverse the membrane as a helical segment. The Extracellular portion of the chain corresponds to 165–195 (RLTFCNSNIVHHIYCDTIPLSKISCTDSSIN). Residues 196–216 (FLMVFIFSGSIQVFSIVTILV) form a helical membrane-spanning segment. Topologically, residues 217-240 (SYTFVLFAILKKKSDKGVRKAFST) are cytoplasmic. Residues 241–261 (CGAHLFSVSLYYGPLLFIYVG) traverse the membrane as a helical segment. Residues 262–271 (PASPQADDQD) lie on the Extracellular side of the membrane. Residues 272-292 (MVEPLFYTVIIPLLNPIIYSL) form a helical membrane-spanning segment. Residues 293–313 (RNKQVTVSFTKMLKKHVKVSY) are Cytoplasmic-facing.

Belongs to the G-protein coupled receptor 1 family.

The protein resides in the cell membrane. Odorant receptor. The sequence is that of Olfactory receptor 5H1 (OR5H1) from Homo sapiens (Human).